Consider the following 334-residue polypeptide: Oligopeptide transport ATP-binding protein OppF (334 aa).

The ABC transporter domain occupies 12–265 (LEIADLKVHF…PLHPYTRALM (254 aa)). 57 to 64 (GESGCGKS) lines the ATP pocket.

It belongs to the ABC transporter superfamily. The complex is composed of two ATP-binding proteins (OppD and OppF), two transmembrane proteins (OppB and OppC) and a solute-binding protein (OppA or MppA).

It is found in the cell inner membrane. It carries out the reaction a [peptide](out) + ATP + H2O = a [peptide](in) + ADP + phosphate + H(+). The enzyme catalyses L-alanyl-gamma-D-glutamyl-meso-2,6-diaminopimelate(out) + ATP + H2O = L-alanyl-gamma-D-glutamyl-meso-2,6-diaminopimelate(in) + ADP + phosphate + H(+). Part of the ABC transporter complex OppABCDF involved in the uptake of oligopeptides and of the ABC transporter complex MppA-OppBCDF involved in the uptake of the cell wall murein tripeptide L-alanyl-gamma-D-glutamyl-meso-diaminopimelate. Probably responsible for energy coupling to the transport system. Plays an important nutritional role and is involved in the recycling of cell wall peptides. This Escherichia coli (strain K12) protein is Oligopeptide transport ATP-binding protein OppF (oppF).